A 511-amino-acid polypeptide reads, in one-letter code: Bifunctional purine biosynthesis protein PurH (511 aa).

Residues 1–145 form the MGS-like domain; sequence MKKRALVSVS…KNHKFVSVIV (145 aa).

It belongs to the PurH family.

The enzyme catalyses (6R)-10-formyltetrahydrofolate + 5-amino-1-(5-phospho-beta-D-ribosyl)imidazole-4-carboxamide = 5-formamido-1-(5-phospho-D-ribosyl)imidazole-4-carboxamide + (6S)-5,6,7,8-tetrahydrofolate. It carries out the reaction IMP + H2O = 5-formamido-1-(5-phospho-D-ribosyl)imidazole-4-carboxamide. The protein operates within purine metabolism; IMP biosynthesis via de novo pathway; 5-formamido-1-(5-phospho-D-ribosyl)imidazole-4-carboxamide from 5-amino-1-(5-phospho-D-ribosyl)imidazole-4-carboxamide (10-formyl THF route): step 1/1. It functions in the pathway purine metabolism; IMP biosynthesis via de novo pathway; IMP from 5-formamido-1-(5-phospho-D-ribosyl)imidazole-4-carboxamide: step 1/1. The polypeptide is Bifunctional purine biosynthesis protein PurH (Bacillus thuringiensis subsp. konkukian (strain 97-27)).